The chain runs to 422 residues: uncharacterized protein (422 aa).

12 helical membrane passes run 23–43, 47–67, 90–110, 112–132, 151–171, 172–192, 228–248, 263–283, 291–308, 318–340, 352–372, and 381–401; these read IVKI…LIYD, AIGT…LAPV, AIVL…WFVM, LMIV…ALIP, AQIV…FISP, SYTM…VLFI, ILYP…PWEA, IVYS…GFVL, YGLL…AFFI, VFFA…YTII, VYAV…VICG, and GKVI…ILLF.

It belongs to the major facilitator superfamily.

The protein resides in the cell membrane. This is an uncharacterized protein from Bacillus subtilis (strain 168).